A 73-amino-acid chain; its full sequence is Translation initiation factor IF-1 (73 aa).

In terms of domain architecture, S1-like spans 1-72 (MAKEDHIEMA…SKGRIIFRDK (72 aa)).

This sequence belongs to the IF-1 family. As to quaternary structure, component of the 30S ribosomal translation pre-initiation complex which assembles on the 30S ribosome in the order IF-2 and IF-3, IF-1 and N-formylmethionyl-tRNA(fMet); mRNA recruitment can occur at any time during PIC assembly.

The protein localises to the cytoplasm. Its function is as follows. One of the essential components for the initiation of protein synthesis. Stabilizes the binding of IF-2 and IF-3 on the 30S subunit to which N-formylmethionyl-tRNA(fMet) subsequently binds. Helps modulate mRNA selection, yielding the 30S pre-initiation complex (PIC). Upon addition of the 50S ribosomal subunit IF-1, IF-2 and IF-3 are released leaving the mature 70S translation initiation complex. This chain is Translation initiation factor IF-1, found in Legionella pneumophila (strain Paris).